The sequence spans 624 residues: Alpha-amylase 1 (624 aa).

Residues 1–28 (MLLINFFIAVLGVISLSPIVVARYILRR) form the signal peptide. Residues 40-133 (ESVTGSNHVQ…SDTSVTYTTS (94 aa)) form the CBM21 domain. A disulfide bond links Cys-177 and Cys-185. Position 230 (Trp-230) interacts with substrate. Asn-268 serves as a coordination point for Ca(2+). Position 269 (His-269) interacts with substrate. Cys-297 and Cys-311 form a disulfide bridge. A glycan (N-linked (GlcNAc...) asparagine) is linked at Asn-304. Residues Glu-309 and Asp-322 each contribute to the Ca(2+) site. Asn-344 carries an N-linked (GlcNAc...) asparagine glycan. Arg-351 serves as a coordination point for substrate. Asp-353, His-357, and Glu-377 together coordinate Ca(2+). Asp-353 serves as the catalytic Nucleophile. Substrate is bound at residue 356–357 (KH). The Proton donor role is filled by Glu-377. Residue Gly-381 participates in substrate binding. Cysteines 387 and 430 form a disulfide. Substrate-binding residues include Asp-444 and Arg-491. Cys-587 and Cys-622 form a disulfide bridge.

Belongs to the glycosyl hydrolase 13 family. The cofactor is Ca(2+).

It is found in the secreted. It carries out the reaction Endohydrolysis of (1-&gt;4)-alpha-D-glucosidic linkages in polysaccharides containing three or more (1-&gt;4)-alpha-linked D-glucose units.. The sequence is that of Alpha-amylase 1 (LKA1) from Lipomyces kononenkoae (Yeast).